The primary structure comprises 187 residues: UPF0301 protein Ppha_2142 (187 aa).

This sequence belongs to the UPF0301 (AlgH) family.

The polypeptide is UPF0301 protein Ppha_2142 (Pelodictyon phaeoclathratiforme (strain DSM 5477 / BU-1)).